A 244-amino-acid chain; its full sequence is Ribosomal RNA small subunit methyltransferase G (244 aa).

Residues glycine 79, phenylalanine 84, 102-104, 130-131, and arginine 149 each bind S-adenosyl-L-methionine; these read DST and AE. The tract at residues 225–244 is disordered; it reads DRYPRREGVPNQQPLFWSAK. The segment covering 234-244 has biased composition (polar residues); sequence PNQQPLFWSAK.

It belongs to the methyltransferase superfamily. RNA methyltransferase RsmG family.

It localises to the cytoplasm. Functionally, specifically methylates the N7 position of a guanine in 16S rRNA. The protein is Ribosomal RNA small subunit methyltransferase G of Deinococcus deserti (strain DSM 17065 / CIP 109153 / LMG 22923 / VCD115).